The sequence spans 307 residues: Ribosomal RNA small subunit methyltransferase H (307 aa).

Residues 32–34 (GGH), D52, F78, D100, and Q107 contribute to the S-adenosyl-L-methionine site.

The protein belongs to the methyltransferase superfamily. RsmH family.

The protein localises to the cytoplasm. It carries out the reaction cytidine(1402) in 16S rRNA + S-adenosyl-L-methionine = N(4)-methylcytidine(1402) in 16S rRNA + S-adenosyl-L-homocysteine + H(+). Functionally, specifically methylates the N4 position of cytidine in position 1402 (C1402) of 16S rRNA. In Coxiella burnetii (strain CbuK_Q154) (Coxiella burnetii (strain Q154)), this protein is Ribosomal RNA small subunit methyltransferase H.